The following is a 196-amino-acid chain: Putative 3-methyladenine DNA glycosylase (196 aa).

This sequence belongs to the DNA glycosylase MPG family.

This Chlamydia pneumoniae (Chlamydophila pneumoniae) protein is Putative 3-methyladenine DNA glycosylase.